A 314-amino-acid polypeptide reads, in one-letter code: Homoserine O-acetyltransferase (314 aa).

Cysteine 142 (acyl-thioester intermediate) is an active-site residue. Substrate is bound by residues lysine 163 and serine 192. The active-site Proton acceptor is the histidine 235. Residue glutamate 237 is part of the active site. Residue arginine 249 coordinates substrate.

The protein belongs to the MetA family.

It localises to the cytoplasm. It catalyses the reaction L-homoserine + acetyl-CoA = O-acetyl-L-homoserine + CoA. The protein operates within amino-acid biosynthesis; L-methionine biosynthesis via de novo pathway; O-acetyl-L-homoserine from L-homoserine: step 1/1. Transfers an acetyl group from acetyl-CoA to L-homoserine, forming acetyl-L-homoserine. This chain is Homoserine O-acetyltransferase, found in Streptococcus thermophilus (strain ATCC BAA-250 / LMG 18311).